Here is a 33-residue protein sequence, read N- to C-terminus: Brevinin-2GRb (33 aa).

In terms of tissue distribution, expressed by the skin glands.

The protein resides in the secreted. Its function is as follows. Antimicrobial peptide active against the Gram-positive bacterium S.aureus (MIC=25 uM) and against the Gram-negative bacteria E.coli (MIC=6 uM). Has no antifungal activity against C.albicans. Shows hemolytic activity against human erythrocytes only at high concentrations (LC(50)=180 uM). This is Brevinin-2GRb from Odorrana grahami (Yunnanfu frog).